A 252-amino-acid chain; its full sequence is Imidazole glycerol phosphate synthase subunit HisF (252 aa).

Catalysis depends on residues aspartate 11 and aspartate 130.

It belongs to the HisA/HisF family. Heterodimer of HisH and HisF.

The protein localises to the cytoplasm. It carries out the reaction 5-[(5-phospho-1-deoxy-D-ribulos-1-ylimino)methylamino]-1-(5-phospho-beta-D-ribosyl)imidazole-4-carboxamide + L-glutamine = D-erythro-1-(imidazol-4-yl)glycerol 3-phosphate + 5-amino-1-(5-phospho-beta-D-ribosyl)imidazole-4-carboxamide + L-glutamate + H(+). Its pathway is amino-acid biosynthesis; L-histidine biosynthesis; L-histidine from 5-phospho-alpha-D-ribose 1-diphosphate: step 5/9. Functionally, IGPS catalyzes the conversion of PRFAR and glutamine to IGP, AICAR and glutamate. The HisF subunit catalyzes the cyclization activity that produces IGP and AICAR from PRFAR using the ammonia provided by the HisH subunit. This chain is Imidazole glycerol phosphate synthase subunit HisF, found in Polynucleobacter asymbioticus (strain DSM 18221 / CIP 109841 / QLW-P1DMWA-1) (Polynucleobacter necessarius subsp. asymbioticus).